Here is a 272-residue protein sequence, read N- to C-terminus: Elongation factor Ts (272 aa).

Residues 76–79 (TDFV) are involved in Mg(2+) ion dislocation from EF-Tu.

This sequence belongs to the EF-Ts family.

The protein localises to the cytoplasm. Functionally, associates with the EF-Tu.GDP complex and induces the exchange of GDP to GTP. It remains bound to the aminoacyl-tRNA.EF-Tu.GTP complex up to the GTP hydrolysis stage on the ribosome. The chain is Elongation factor Ts from Corynebacterium urealyticum (strain ATCC 43042 / DSM 7109).